A 548-amino-acid chain; its full sequence is Folylpolyglutamate synthase (548 aa).

Position 130 to 133 (130 to 133 (GKGS)) interacts with ATP. Mg(2+) is bound by residues Ser-157, Glu-234, and His-262. Residues Arg-382 and Asp-396 each contribute to the ATP site.

It belongs to the folylpolyglutamate synthase family. It depends on a monovalent cation as a cofactor.

Its subcellular location is the mitochondrion inner membrane. The protein resides in the mitochondrion matrix. It is found in the cytoplasm. The catalysed reaction is (6S)-5,6,7,8-tetrahydrofolyl-(gamma-L-Glu)(n) + L-glutamate + ATP = (6S)-5,6,7,8-tetrahydrofolyl-(gamma-L-Glu)(n+1) + ADP + phosphate + H(+). It participates in cofactor biosynthesis; tetrahydrofolylpolyglutamate biosynthesis. Its function is as follows. Catalyzes conversion of folates to polyglutamate derivatives allowing concentration of folate compounds in the cell and the intracellular retention of these cofactors, which are important substrates for most of the folate-dependent enzymes that are involved in one-carbon transfer reactions involved in purine, pyrimidine and amino acid synthesis. Required for methionine synthesis and maintenance of intact mitochondrial DNA. Involved in telomere maintenance. The protein is Folylpolyglutamate synthase of Saccharomyces cerevisiae (strain FostersB) (Baker's yeast).